We begin with the raw amino-acid sequence, 734 residues long: Protein arginine N-methyltransferase 5 (734 aa).

Positions 1–16 are enriched in polar residues; the sequence is MSNRTYADNLFPQQVA. A disordered region spans residues 1 to 39; the sequence is MSNRTYADNLFPQQVAEQHEEQMSSGSSPKSNSPSRSIS. The span at 24-39 shows a compositional bias: low complexity; sequence SSGSSPKSNSPSRSIS. Positions 42-329 are TIM barrel; it reads EAANSRIHIG…EYSQALRHAV (288 aa). The 347-residue stretch at 360–706 folds into the SAM-dependent MTase PRMT-type domain; it reads LQAPLQPLSE…VDNTGVWYEW (347 aa). An S-adenosyl-L-methionine-binding site is contributed by Tyr-376. Phe-379 lines the a protein pocket. Residues 385–386, Glu-450, and 477–478 contribute to the S-adenosyl-L-methionine site; these read KY and DM. A protein-binding residues include Glu-499 and Glu-508. Active-site proton donor/acceptor residues include Glu-499 and Glu-508. The segment at 529–734 is beta barrel; sequence PQKYTSYVKP…PNGESYYMRM (206 aa). The dimerization stretch occupies residues 541–589; the sequence is STHIHQTIKAQSIPYLSRAIPSHGRGEPELDEDEMWIQKYPQGHVRNNM.

It belongs to the class I-like SAM-binding methyltransferase superfamily. Protein arginine N-methyltransferase family. In terms of assembly, homodimer. Interacts with cep-1 (via C-terminus domain); does not methylate cep-1. Interacts with cbp-1 (via N-terminus domain and HAT domain); the interaction results in methylation of cbp-1. Component of a complex that contains cep-1 and cbp-1. May interact with pid-2, pid-4 and pid-5.

Its subcellular location is the nucleus. It carries out the reaction L-arginyl-[protein] + 2 S-adenosyl-L-methionine = N(omega),N(omega)'-dimethyl-L-arginyl-[protein] + 2 S-adenosyl-L-homocysteine + 2 H(+). In terms of biological role, catalyzes the symmetrical dimethylation of arginine residues in targets such as small nuclear ribonucleoproteins, histone H2A/H4 and cbp-1. Dimethylation occurs in a distributive manner where the protein is released after the addition of the first methyl group prior to rebinding for the addition of the second methyl group. Plays a role in the negative regulation of DNA damage-induced apoptosis. By methylating cbp-1, may prevent apoptosis by repressing the capacity of cbp-1 to enhance cep-1 dependent transcription activation of the programmed cell death activator egl-1. Plays a role in heat and oxidative stress resistance. In Caenorhabditis elegans, this protein is Protein arginine N-methyltransferase 5.